The sequence spans 78 residues: MADEQKQQSFEQALEQLEQLVNELEQGDLPLEQSLKKFEQAIALSRSSQQQLQQAEQKVTTLLAEQQSGNDESNGELM.

It belongs to the XseB family. As to quaternary structure, heterooligomer composed of large and small subunits.

Its subcellular location is the cytoplasm. It catalyses the reaction Exonucleolytic cleavage in either 5'- to 3'- or 3'- to 5'-direction to yield nucleoside 5'-phosphates.. Its function is as follows. Bidirectionally degrades single-stranded DNA into large acid-insoluble oligonucleotides, which are then degraded further into small acid-soluble oligonucleotides. This chain is Exodeoxyribonuclease 7 small subunit, found in Idiomarina loihiensis (strain ATCC BAA-735 / DSM 15497 / L2-TR).